The primary structure comprises 382 residues: Alkanesulfonate monooxygenase (382 aa).

The protein belongs to the SsuD family. Homotetramer.

The enzyme catalyses an alkanesulfonate + FMNH2 + O2 = an aldehyde + FMN + sulfite + H2O + 2 H(+). Catalyzes the desulfonation of aliphatic sulfonates. This Yersinia pestis bv. Antiqua (strain Antiqua) protein is Alkanesulfonate monooxygenase.